A 295-amino-acid chain; its full sequence is MAITAQMVKELREKTGAGMMDCKKALTEMNGDMEKAIDFLREKGIAKAAKKADRIAAEGLTYIETKGNEALILELNSETDFVAKNEGFQALTKELAAHLLANKPATVEEALAQSYENGKTVEEHINEAIAKIGEKITLRRFEIVSKTDADAFGAYLHMGGRIGVVTVLEGTTDEEAAKDVAMHVAAVNPKYIDRDAVTAEEVEHERQVLTQQALNEGKPEKIVAKMVEGRLGKFFEEICLLDQAFVKNPDMKVRQFVESKGGTVKGFVRYAVGEGIEKREDNFAEEVMNQVKGNN.

Positions 79–82 (TDFV) are involved in Mg(2+) ion dislocation from EF-Tu.

It belongs to the EF-Ts family.

It localises to the cytoplasm. Functionally, associates with the EF-Tu.GDP complex and induces the exchange of GDP to GTP. It remains bound to the aminoacyl-tRNA.EF-Tu.GTP complex up to the GTP hydrolysis stage on the ribosome. This Bacillus cytotoxicus (strain DSM 22905 / CIP 110041 / 391-98 / NVH 391-98) protein is Elongation factor Ts.